The chain runs to 168 residues: Shikimate kinase (168 aa).

An ATP-binding site is contributed by 12–17; the sequence is GAGKST. Serine 16 serves as a coordination point for Mg(2+). Substrate contacts are provided by aspartate 34, arginine 58, and glycine 80. Residue arginine 117 coordinates ATP. Residue arginine 136 participates in substrate binding. Arginine 153 is a binding site for ATP.

The protein belongs to the shikimate kinase family. Monomer. It depends on Mg(2+) as a cofactor.

The protein localises to the cytoplasm. The enzyme catalyses shikimate + ATP = 3-phosphoshikimate + ADP + H(+). Its pathway is metabolic intermediate biosynthesis; chorismate biosynthesis; chorismate from D-erythrose 4-phosphate and phosphoenolpyruvate: step 5/7. Its function is as follows. Catalyzes the specific phosphorylation of the 3-hydroxyl group of shikimic acid using ATP as a cosubstrate. The polypeptide is Shikimate kinase (Rhodococcus jostii (strain RHA1)).